We begin with the raw amino-acid sequence, 185 residues long: Ribosome-recycling factor (185 aa).

It belongs to the RRF family.

Its subcellular location is the cytoplasm. In terms of biological role, responsible for the release of ribosomes from messenger RNA at the termination of protein biosynthesis. May increase the efficiency of translation by recycling ribosomes from one round of translation to another. The polypeptide is Ribosome-recycling factor (Baumannia cicadellinicola subsp. Homalodisca coagulata).